Consider the following 832-residue polypeptide: Protein translocase subunit SecA (832 aa).

ATP contacts are provided by residues Gln-87, 105-109 (GEGKT), and Asp-512.

It belongs to the SecA family. As to quaternary structure, monomer and homodimer. Part of the essential Sec protein translocation apparatus which comprises SecA, SecYEG and auxiliary proteins SecDF-YajC and YidC.

Its subcellular location is the cell membrane. It localises to the cytoplasm. The enzyme catalyses ATP + H2O + cellular proteinSide 1 = ADP + phosphate + cellular proteinSide 2.. In terms of biological role, part of the Sec protein translocase complex. Interacts with the SecYEG preprotein conducting channel. Has a central role in coupling the hydrolysis of ATP to the transfer of proteins into and across the cell membrane, serving as an ATP-driven molecular motor driving the stepwise translocation of polypeptide chains across the membrane. This chain is Protein translocase subunit SecA, found in Wigglesworthia glossinidia brevipalpis.